The following is a 655-amino-acid chain: Kelch-like protein 13 (655 aa).

Positions 92–161 (CDVTLMPGDT…IYTAKLSLNM (70 aa)) constitute a BTB domain. A BACK domain is found at 196–297 (CVEVGRIANT…TPQELINYVQ (102 aa)). Kelch repeat units lie at residues 341 to 389 (HLVT…VIGN), 390 to 441 (FLYV…ALKG), 442 to 488 (YLYA…VYGG), 490 to 535 (MYIS…TVGE), 537 to 587 (LYVI…VFEN), and 588 to 636 (KIYV…TLTV).

Component of the BCR(KLHL9-KLHL13) E3 ubiquitin ligase complex, at least composed of CUL3, KLHL9, KLHL13 and RBX1. Interacts with AURKB.

It functions in the pathway protein modification; protein ubiquitination. In terms of biological role, substrate-specific adapter of a BCR (BTB-CUL3-RBX1) E3 ubiquitin-protein ligase complex required for mitotic progression and cytokinesis. The BCR(KLHL9-KLHL13) E3 ubiquitin ligase complex mediates the ubiquitination of AURKB and controls the dynamic behavior of AURKB on mitotic chromosomes and thereby coordinates faithful mitotic progression and completion of cytokinesis. The polypeptide is Kelch-like protein 13 (KLHL13) (Bos taurus (Bovine)).